We begin with the raw amino-acid sequence, 1255 residues long: TBC1 domain family member 1 (1255 aa).

Position 146 is a phosphoserine (S146). The tract at residues 208 to 228 (RTDWEAPTGQPSAPGPRPMRK) is disordered. Residue S229 is modified to Phosphoserine; by PKB/AKT1. S231 carries the phosphoserine; by AMPK modification. Residues 238-398 (LAFRKEFQDA…LHKLCERIEG (161 aa)) form the PID domain. At S489 the chain carries Phosphoserine; by PKB/AKT1. S497 is modified (phosphoserine). T499 carries the phosphothreonine; by PKB/AKT1 modification. S501, S519, S521, S559, S560, S564, S565, and S579 each carry phosphoserine. Disordered stretches follow at residues 509 to 544 (GNKA…MGDK) and 559 to 581 (SSDD…LSPQ). A compositionally biased stretch (low complexity) spans 519–539 (SASVDLDSSTSSTLSNTSKEL). Phosphothreonine is present on T590. Disordered stretches follow at residues 595–614 (PVEC…VSQR) and 621–681 (SVST…GNAV). At S608 the chain carries Phosphoserine. Residue S621 is modified to Phosphoserine; by PKB/AKT1. 2 positions are modified to phosphoserine: S660 and S661. Residues 670–679 (HNSSGEQSGN) show a composition bias toward polar residues. S697 carries the post-translational modification Phosphoserine; by PKB/AKT1. Residues S698 and S699 each carry the phosphoserine modification. The residue at position 700 (S700) is a Phosphoserine; by AMPK. Residues 764-786 (DSPSRYEDYSELGELPPRSPLEP) form a disordered region. Phosphoserine is present on residues S782 and S1028. Residues 887–1081 (GVPRHHRGEI…RVFDMIFLQG (195 aa)) enclose the Rab-GAP TBC domain. Y1039 is subject to Phosphotyrosine. Residue T1218 is modified to Phosphothreonine. The disordered stretch occupies residues 1233–1255 (LRRQSARPSTPEPDCTQLEPTGD).

Interacts with APPL2 (via BAR domain); interaction is dependent of TBC1D1 phosphorylation at Ser-229; interaction diminishes the phosphorylation of TBC1D1 at Thr-590, resulting in inhibition of SLC2A4/GLUT4 translocation and glucose uptake. In terms of processing, insulin-stimulated phosphorylation by AKT family kinases stimulates SLC2A4/GLUT4 translocation. In terms of tissue distribution, expressed in highest levels in hematopoietic cells, testis and kidney.

Its subcellular location is the nucleus. Its function is as follows. May act as a GTPase-activating protein for Rab family protein(s). May play a role in the cell cycle and differentiation of various tissues. Involved in the trafficking and translocation of GLUT4-containing vesicles and insulin-stimulated glucose uptake into cells. This is TBC1 domain family member 1 (Tbc1d1) from Mus musculus (Mouse).